We begin with the raw amino-acid sequence, 155 residues long: Ribosome maturation factor RimP (155 aa).

The protein belongs to the RimP family.

The protein localises to the cytoplasm. In terms of biological role, required for maturation of 30S ribosomal subunits. This Synechococcus sp. (strain WH7803) protein is Ribosome maturation factor RimP.